The sequence spans 2473 residues: Reducing polyketide synthase grgA (2473 aa).

One can recognise a Ketosynthase family 3 (KS3) domain in the interval 15-446 (REPIAIVGSS…GTNAHAIIES (432 aa)). Active-site for beta-ketoacyl synthase activity residues include Cys-188, His-327, and His-366. In terms of domain architecture, Malonyl-CoA:ACP transacylase (MAT) spans 559 to 882 (IFTGQGAQWA…SGVLKRGQNA (324 aa)). The segment at 956–1099 (HELLGHSVTH…GGVRLWLGEP (144 aa)) is N-terminal hotdog fold. Positions 956-1260 (HELLGHSVTH…IHLSAVGQRR (305 aa)) are dehydratase (DH) domain. Residues 956–1262 (HELLGHSVTH…LSAVGQRRDP (307 aa)) form the PKS/mFAS DH domain. His-990 functions as the Proton acceptor; for dehydratase activity in the catalytic mechanism. Residues 1114–1262 (MEALDMEQLY…LSAVGQRRDP (149 aa)) form a C-terminal hotdog fold region. The Proton donor; for dehydratase activity role is filled by Asp-1172. The segment at 1300–1606 (TAYFYLRQLR…PSFCSVIVAQ (307 aa)) is methyltransfrase (MT) domain. In terms of domain architecture, Ketoreductase (KR) spans 2108–2281 (TYLLCGMTGD…AGSVIHIAIL (174 aa)). The 86-residue stretch at 2388 to 2473 (AECLVILESC…LVEWRRLNKS (86 aa)) folds into the Carrier domain. Ser-2426 is modified (O-(pantetheine 4'-phosphoryl)serine).

It depends on pantetheine 4'-phosphate as a cofactor.

It participates in secondary metabolite biosynthesis. Functionally, reducing polyketide synthase; part of the gene cluster that mediates the biosynthesis of gregatin A, a fungal polyketide featuring an alkylated furanone core. The PKS grgA synthesizes C11 and C4 polyketide chains in the presence and absence of the trans-enoyl reductase grgB, respectively. The polyketide transferase grgF is then responsible for the fusion of the two carbon chains to produce the furanone skeleton of gregatin A. Next, the cytochrome P450 monooxygenase grgG accepts performs the oxidative cyclization to furnish the gregatin scaffold and leads to the formation of desmethylgregatin A. Finally, the O-methyltransferase grgD methylates the carboxyl group of desmethylgregatin A to provide gregatin A. This is Reducing polyketide synthase grgA from Penicillium sp.